The sequence spans 430 residues: Dihydrolipoyllysine-residue acetyltransferase component of pyruvate dehydrogenase complex (430 aa).

The Lipoyl-binding domain occupies 2–77 (AFEFRLPDIG…VVGDVIVKID (76 aa)). Lys43 is subject to N6-lipoyllysine. Positions 80 to 122 (DAEDMQFKGHDDDSSSKEEPAKEEAPAEQAPVATQTEEVDENR) are disordered. A compositionally biased stretch (basic and acidic residues) spans 84–104 (MQFKGHDDDSSSKEEPAKEEA). Residues 125–162 (KAMPSVRKYAREKGVNIKAVSGSGKNGRITKEDVDAYL) form the Peripheral subunit-binding (PSBD) domain. Residues 165–200 (GAPTASNESAASATSEEVAETPAAPAAVTLEGDFPE) are disordered. The segment covering 166-193 (APTASNESAASATSEEVAETPAAPAAVT) has biased composition (low complexity). The active site involves His401.

Belongs to the 2-oxoacid dehydrogenase family. As to quaternary structure, forms a 24-polypeptide structural core with octahedral symmetry. It depends on (R)-lipoate as a cofactor.

It catalyses the reaction N(6)-[(R)-dihydrolipoyl]-L-lysyl-[protein] + acetyl-CoA = N(6)-[(R)-S(8)-acetyldihydrolipoyl]-L-lysyl-[protein] + CoA. In terms of biological role, the pyruvate dehydrogenase complex catalyzes the overall conversion of pyruvate to acetyl-CoA and CO(2). It contains multiple copies of three enzymatic components: pyruvate dehydrogenase (E1), dihydrolipoamide acetyltransferase (E2) and lipoamide dehydrogenase (E3). The sequence is that of Dihydrolipoyllysine-residue acetyltransferase component of pyruvate dehydrogenase complex (pdhC) from Staphylococcus aureus (strain COL).